The following is a 1096-amino-acid chain: MATVPVYCVCRLPYDVTRFMIECDACKDWFHGSCVGVEEEEAPDIDIYHCPNCEKTHGKSTLKKKRTWHKHGPGPTPDVKPVQNGSQLFIKELRSRTFPSAEDVVSRVPGSQLTVGYMEEHGFTEPILVPKKDGLGLAVPAPTFYVSDVENYVGPERSVDVTDVTKQKDCKMKLKEFVDYYYSTNRKRVLNVTNLEFSDTRMSSFVEPPDIVKKLSWVENYWPDDALLAKPKVTKYCLICVKDSYTDFHIDSGGASAWYHVLKGEKIFYLIRPASANISLYERWRSASNHSEMFFADQVDRCYKCTVKQGQTLFIPSGWIYATLTPVDCLAFAGHFLHSLSVEMQMRAYEVERRLKLGSLTQFPNFETACWYMGKHLLEAFKGSHKSGKQLPPHLVQGAKILNGAFRSWTKKQALAEHEDELPEHFRPSQLIKDLAKEIRLSENASKTVRPEVNAAASSDEVCDGDREKEEPPSPVETTPPRSLLEKVSKKKTSKTVKMPKPSKIPKPPKSPKPPKTLKLKDGSKKKGKKCKESASPTIPNLDLLEAHTKEALTKMEPPKKGKTPKSVLSVPNKDTVHTQNDMERLEIREQTKSKSEAKWKYKNSKPDSLLKMEEEQRLEKSPLAGNKDKFSFSFSNRKLLGSKALRPPSSPGVFGALQSFKEDKAKPVRDEYEYVSDDGELKIDEFPIRRKKSAPKRDLSFLLDKKEALLMPTSKPKLDSAVYKSDDSSDEGSLHIDTDTKPGRNAKVKKESGSSAAGILDLLQASEEVGALEYNPNSQPPASPSTQEAIQGMLSMANLQASDSCLQTTWGTGQAKGGSLAAHGARKIGGGNKGTGKRLLKRTAKNSVDLEDYEEQDHLDACFKDSDYVYPSLESDEDNPVFKSRSKKRKGSDDAPYSPTARVGPSVPRQDRPVREGTRVASIETGLAAAAAKLSQQEEQKNRKKKNTKRKPAPNTASPSISTSASASTGTTSASTTPASTTPASTTPASTTPASTSTASSQASQEGSSPEPPPESHSSSLADHEYTAAGTFSGSQAGRASQPMAPGVFLTQRRPSASSPNNTAAKGKRTKKGMATAKQRLGKILKIHRNGKLLL.

A PHD-type zinc finger spans residues 5 to 56 (PVYCVCRLPYDVTRFMIECDACKDWFHGSCVGVEEEEAPDIDIYHCPNCEKT). Positions 193 and 246 each coordinate 2-oxoglutarate. Residues 197-353 (FSDTRMSSFV…MQMRAYEVER (157 aa)) form the JmjC domain. 2 residues coordinate Fe cation: His-249 and Asp-251. The 2-oxoglutarate site is built by Tyr-259 and Lys-266. Tyr-321 contributes to the Fe cation binding site. Thr-323 provides a ligand contact to 2-oxoglutarate. Residues 448–630 (TVRPEVNAAA…KSPLAGNKDK (183 aa)) are disordered. Phosphoserine is present on Ser-474. Thr-479 bears the Phosphothreonine mark. Over residues 503–515 (SKIPKPPKSPKPP) the composition is skewed to pro residues. A Phosphoserine modification is found at Ser-536. Basic and acidic residues-rich tracts occupy residues 545–560 (LEAHTKEALTKMEPPK) and 575–630 (DTVH…NKDK). Ser-651, Ser-677, and Ser-701 each carry phosphoserine. Residue Lys-707 forms a Glycyl lysine isopeptide (Lys-Gly) (interchain with G-Cter in SUMO2) linkage. Lys-716 carries the post-translational modification N6-acetyllysine. Disordered stretches follow at residues 719–755 (LDSAVYKSDDSSDEGSLHIDTDTKPGRNAKVKKESGS), 811–841 (WGTGQAKGGSLAAHGARKIGGGNKGTGKRLL), and 871–1080 (YPSL…TAKQ). Residue Tyr-724 is modified to Phosphotyrosine. Basic and acidic residues predominate over residues 725–753 (KSDDSSDEGSLHIDTDTKPGRNAKVKKES). Residues Ser-726, Ser-729, Ser-730, and Ser-734 each carry the phosphoserine modification. A phosphoserine mark is found at Ser-873, Ser-876, and Ser-893. The span at 910-919 (RQDRPVREGT) shows a compositional bias: basic and acidic residues. Over residues 943-953 (NRKKKNTKRKP) the composition is skewed to basic residues. Over residues 954-1010 (APNTASPSISTSASASTGTTSASTTPASTTPASTTPASTTPASTSTASSQASQEGSS) the composition is skewed to low complexity. 2 stretches are compositionally biased toward polar residues: residues 1031–1040 (GTFSGSQAGR) and 1054–1065 (RRPSASSPNNTA). Ser-1057 is subject to Phosphoserine; by PKA.

Belongs to the JHDM1 histone demethylase family. JHDM1D subfamily. As to quaternary structure, component of the PHF2-ARID5B complex, at least composed of PHF2 and ARID5B. Interacts with HNF4A and NR1H4. Interacts with RELA. In terms of processing, phosphorylated by PKA on specific serine residues, leading to the formation of an active lysine demethylase complex.

Its subcellular location is the nucleus. It localises to the nucleolus. It is found in the chromosome. The protein resides in the centromere. The protein localises to the kinetochore. It catalyses the reaction N(6),N(6)-dimethyl-L-lysyl(9)-[histone H3] + 2-oxoglutarate + O2 = N(6)-methyl-L-lysyl(9)-[histone H3] + formaldehyde + succinate + CO2. Its activity is regulated as follows. Enzymatically inactive by itself, and become active following phosphorylation by PKA. Functionally, lysine demethylase that demethylates both histones and non-histone proteins. Enzymatically inactive by itself, and becomes active following phosphorylation by PKA: forms a complex with ARID5B and mediates demethylation of methylated ARID5B. Demethylation of ARID5B leads to target the PHF2-ARID5B complex to target promoters, where PHF2 mediates demethylation of dimethylated 'Lys-9' of histone H3 (H3K9me2), followed by transcription activation of target genes. The PHF2-ARID5B complex acts as a coactivator of HNF4A in liver. PHF2 is recruited to trimethylated 'Lys-4' of histone H3 (H3K4me3) at rDNA promoters and promotes expression of rDNA. Involved in the activation of toll-like receptor 4 (TLR4)-target inflammatory genes in macrophages by catalyzing the demethylation of trimethylated histone H4 lysine 20 (H4K20me3) at the gene promoters. This is Lysine-specific demethylase PHF2 (Phf2) from Mus musculus (Mouse).